We begin with the raw amino-acid sequence, 191 residues long: Probable molybdenum cofactor guanylyltransferase (191 aa).

GTP contacts are provided by residues 6-8 (LAG), Lys-18, Asp-67, and Asp-92. Asp-92 lines the Mg(2+) pocket.

This sequence belongs to the MobA family. Requires Mg(2+) as cofactor.

Its subcellular location is the cytoplasm. It catalyses the reaction Mo-molybdopterin + GTP + H(+) = Mo-molybdopterin guanine dinucleotide + diphosphate. In terms of biological role, transfers a GMP moiety from GTP to Mo-molybdopterin (Mo-MPT) cofactor (Moco or molybdenum cofactor) to form Mo-molybdopterin guanine dinucleotide (Mo-MGD) cofactor. This chain is Probable molybdenum cofactor guanylyltransferase, found in Thermococcus gammatolerans (strain DSM 15229 / JCM 11827 / EJ3).